The following is a 53-amino-acid chain: Toxin CjTL7 (53 aa).

Residues Met-1–Gly-22 form the signal peptide. Trp-51 is subject to Tryptophan amide.

In terms of processing, contains 4 disulfide bonds.

It localises to the secreted. Its subcellular location is the nematocyst. In vivo, only causes a weak change in behavior in shrimps (C.multidentata) (slight twitching of the walking legs), but no lethal effect is observed. No activity is observed when injected into fly larvae (M.domestica). This chain is Toxin CjTL7, found in Epiactis japonica (Sea anemone).